The sequence spans 169 residues: uncharacterized protein (169 aa).

N-linked (GlcNAc...) asparagine; by host glycosylation is found at N13, N29, N39, and N48. Positions 109 to 111 match the Cell attachment site motif; that stretch reads RGD. N-linked (GlcNAc...) asparagine; by host glycosylation occurs at N135. The chain crosses the membrane as a helical span at residues 145–165; the sequence is IYHMAIVYILIMYQIYILSLI.

The protein resides in the membrane. This is an uncharacterized protein from Acanthamoeba polyphaga (Amoeba).